The sequence spans 71 residues: Large ribosomal subunit protein bL28 (71 aa).

This sequence belongs to the bacterial ribosomal protein bL28 family.

The chain is Large ribosomal subunit protein bL28 from Rubrobacter xylanophilus (strain DSM 9941 / JCM 11954 / NBRC 16129 / PRD-1).